A 297-amino-acid polypeptide reads, in one-letter code: MLDNKDIATPSRTRALLDKYGFNFKKSLGQNFLIDVNIINNIIDASDIDAQTGVIEIGPGMGSLTEQLARHAKRVLAFEIDQRLIPVLNDTLSPYDNVTVINEDILKANIKEAVENHLQDCEKIMVVANLPYYITTPILLNLMQQDIPIDGYVVMMQKEVGERLNAEVGSKAYGSLSIVVQYYTETSKVLTVPKSVFMPPPNVDSIVVKLMQRTEPLVTVDNEEAFFKLAKAAFAQRRKTINNNYQNYFKDGKQHKEVILQWLEQAGIDPRRRGETLSIQDFAKLYEEKKKFPQLEN.

S-adenosyl-L-methionine-binding residues include asparagine 31, leucine 33, glycine 58, glutamate 79, aspartate 104, and asparagine 129.

The protein belongs to the class I-like SAM-binding methyltransferase superfamily. rRNA adenine N(6)-methyltransferase family. RsmA subfamily.

The protein localises to the cytoplasm. The catalysed reaction is adenosine(1518)/adenosine(1519) in 16S rRNA + 4 S-adenosyl-L-methionine = N(6)-dimethyladenosine(1518)/N(6)-dimethyladenosine(1519) in 16S rRNA + 4 S-adenosyl-L-homocysteine + 4 H(+). Its function is as follows. Specifically dimethylates two adjacent adenosines (A1518 and A1519) in the loop of a conserved hairpin near the 3'-end of 16S rRNA in the 30S particle. May play a critical role in biogenesis of 30S subunits. The protein is Ribosomal RNA small subunit methyltransferase A of Staphylococcus aureus (strain Mu3 / ATCC 700698).